A 541-amino-acid polypeptide reads, in one-letter code: MSKLIAFDQEAREGLQKGVDALADAVKVTLGPRGRNVVLDKAFGGPTVTNDGVTIARDIDLEDPFENLGAQLVKSVAIKTNDIAGDGTTTATLLAQALVNEGLRTVAAGANPIAVNRGIAKGTERVVELLRELAQPVADNAAIANVATVSSRDEKIGAMVADAFDKVGKDGVVTVEESQSIEDESIVTEGVSFDKGYLSPYFVTDQETGHAELENPLILLVREKISSLPDFLPVLEKVANSGKPLLIVAEDIEGEPLQMLVLNAIRKSLKVAAVKSPYFGDRRSAFMDDLAIVTGGTVIDSELGHKLSETTLEQLGSARRVNITKEETVLVDGAGSAEAVEERRNQIRNDIERTDSSWDKEKFEERLAKLSGGVAVIRAGGATETEVNERKLRIEDAINAARAAGQEGVIAGGGSVLVQIADEIEELSRKEEGDEGIGLRSLARALRRPAYWIADNAGLDGAVVVSKIAEQPNGSGFNAATLEYGNLLEQGIIDPVKVTHSAVVNATSVARMVLTTETAVVDKPAAPAGQAGAHAGHAHAH.

ATP contacts are provided by residues 29 to 32 (TLGP), 86 to 90 (DGTTT), glycine 413, 478 to 480 (NAA), and aspartate 494.

It belongs to the chaperonin (HSP60) family. As to quaternary structure, forms a cylinder of 14 subunits composed of two heptameric rings stacked back-to-back. Interacts with the co-chaperonin GroES.

The protein resides in the cytoplasm. It catalyses the reaction ATP + H2O + a folded polypeptide = ADP + phosphate + an unfolded polypeptide.. Together with its co-chaperonin GroES, plays an essential role in assisting protein folding. The GroEL-GroES system forms a nano-cage that allows encapsulation of the non-native substrate proteins and provides a physical environment optimized to promote and accelerate protein folding. The polypeptide is Chaperonin GroEL 2 (Corynebacterium jeikeium (strain K411)).